The primary structure comprises 103 residues: MTKFFEKRLTDVIKRPLITEKATKALDLNQYTFEVDPRAAKPDIKAAVEKMFDVKVLGISTMNPPRKSRRVGRFSGKRPQVKKAVVRLAEGNSIQLFPESEEA.

This sequence belongs to the universal ribosomal protein uL23 family. As to quaternary structure, part of the 50S ribosomal subunit. Contacts protein L29, and trigger factor when it is bound to the ribosome.

One of the early assembly proteins it binds 23S rRNA. One of the proteins that surrounds the polypeptide exit tunnel on the outside of the ribosome. Forms the main docking site for trigger factor binding to the ribosome. The polypeptide is Large ribosomal subunit protein uL23 (Prochlorococcus marinus (strain NATL1A)).